The primary structure comprises 234 residues: Gene 53 protein (234 aa).

The protein is Gene 53 protein (53) of Mycobacterium phage L5 (Mycobacteriophage L5).